The following is a 378-amino-acid chain: Dual-specificity RNA methyltransferase RlmN (378 aa).

The Proton acceptor role is filled by E95. Residues 101-345 enclose the Radical SAM core domain; that stretch reads EETRGTLCVS…TTIRKTRGDD (245 aa). Cysteines 108 and 350 form a disulfide. [4Fe-4S] cluster is bound by residues C115, C119, and C122. S-adenosyl-L-methionine-binding positions include 176-177, S208, 230-232, and N307; these read GE and SLH. Residue C350 is the S-methylcysteine intermediate of the active site.

Belongs to the radical SAM superfamily. RlmN family. The cofactor is [4Fe-4S] cluster.

Its subcellular location is the cytoplasm. The enzyme catalyses adenosine(2503) in 23S rRNA + 2 reduced [2Fe-2S]-[ferredoxin] + 2 S-adenosyl-L-methionine = 2-methyladenosine(2503) in 23S rRNA + 5'-deoxyadenosine + L-methionine + 2 oxidized [2Fe-2S]-[ferredoxin] + S-adenosyl-L-homocysteine. It carries out the reaction adenosine(37) in tRNA + 2 reduced [2Fe-2S]-[ferredoxin] + 2 S-adenosyl-L-methionine = 2-methyladenosine(37) in tRNA + 5'-deoxyadenosine + L-methionine + 2 oxidized [2Fe-2S]-[ferredoxin] + S-adenosyl-L-homocysteine. In terms of biological role, specifically methylates position 2 of adenine 2503 in 23S rRNA and position 2 of adenine 37 in tRNAs. m2A2503 modification seems to play a crucial role in the proofreading step occurring at the peptidyl transferase center and thus would serve to optimize ribosomal fidelity. This chain is Dual-specificity RNA methyltransferase RlmN, found in Burkholderia thailandensis (strain ATCC 700388 / DSM 13276 / CCUG 48851 / CIP 106301 / E264).